The sequence spans 262 residues: Small ribosomal subunit protein uS2 (262 aa).

The interval 228-262 (VSNEEVAAEQNINLDDKEESEQAETTEENTSVESN) is disordered. Acidic residues predominate over residues 243–254 (DKEESEQAETTE).

Belongs to the universal ribosomal protein uS2 family.

This Staphylococcus epidermidis (strain ATCC 35984 / DSM 28319 / BCRC 17069 / CCUG 31568 / BM 3577 / RP62A) protein is Small ribosomal subunit protein uS2.